Here is a 460-residue protein sequence, read N- to C-terminus: MASPSRSGVFQAETDARLEAYAESISFDSRLYEHDIRGSIAHANMLREVGLLTEDEFKLIRDTLETIRGELDRGELPMRFELEDIHMHVEQALIDRIGDTGRKLHTARSRNDQVSTDTRMWIRQSLDEIDALLVDLQSAFLSRCENDFDIILPAYTHLQRAQPVLAPHYWLAYIEKLERDRQRIADCRKRVNQCSLGIAAVAGTTLPIDRQHTASALDFEGITANSLDTSSDRDFVVESTFVMSLIASHLSGWAEEWILWSTVEFDFIQIPQAFCTGSSIMPQKVNPDTLELTRGKSARVMGALQTLMLLIKNLPLAYNRDLQEDKPPLFDAFDTTRAMLELAAPIVRGAELKRESIAARIEKGYLDATTLMEWMIARGMPQRTAHHLVGAIVSEAMQQGVTLSDLPLETYQKLSDQIDESVYEVLGTSNAIAAFRSEGSTAPARVREQIKQWTSRLENA.

This sequence belongs to the lyase 1 family. Argininosuccinate lyase subfamily.

The protein resides in the cytoplasm. It carries out the reaction 2-(N(omega)-L-arginino)succinate = fumarate + L-arginine. It participates in amino-acid biosynthesis; L-arginine biosynthesis; L-arginine from L-ornithine and carbamoyl phosphate: step 3/3. The sequence is that of Argininosuccinate lyase from Rhodopirellula baltica (strain DSM 10527 / NCIMB 13988 / SH1).